Reading from the N-terminus, the 178-residue chain is Photosystem I assembly protein Ycf4 (178 aa).

Helical transmembrane passes span 19-39 and 61-81; these read ILVA…SLSS and LIMG…WAVI.

It belongs to the Ycf4 family.

It localises to the cellular thylakoid membrane. Seems to be required for the assembly of the photosystem I complex. This chain is Photosystem I assembly protein Ycf4, found in Synechococcus sp. (strain CC9311).